The sequence spans 237 residues: Purine nucleoside phosphorylase DeoD-type (237 aa).

Residue His4 coordinates a purine D-ribonucleoside. Phosphate is bound by residues Gly20, Arg24, Arg43, and 87 to 90 (RVGT). A purine D-ribonucleoside contacts are provided by residues 179–181 (EME) and 203–204 (SD). Asp204 acts as the Proton donor in catalysis.

It belongs to the PNP/UDP phosphorylase family. Homohexamer; trimer of homodimers.

The catalysed reaction is a purine D-ribonucleoside + phosphate = a purine nucleobase + alpha-D-ribose 1-phosphate. It carries out the reaction a purine 2'-deoxy-D-ribonucleoside + phosphate = a purine nucleobase + 2-deoxy-alpha-D-ribose 1-phosphate. Functionally, catalyzes the reversible phosphorolytic breakdown of the N-glycosidic bond in the beta-(deoxy)ribonucleoside molecules, with the formation of the corresponding free purine bases and pentose-1-phosphate. This is Purine nucleoside phosphorylase DeoD-type from Streptococcus pyogenes serotype M12 (strain MGAS2096).